We begin with the raw amino-acid sequence, 558 residues long: Two-component response regulator-like APRR5 (558 aa).

Residues 51-169 enclose the Response regulatory domain; sequence RVLLVEADDS…ELRNLWQHVW (119 aa). The tract at residues 180 to 233 is disordered; that stretch reads FPWNESVGQQKAEGASANNSNGKRDDHVVSGNGGDAQSSCTRPEMEGESADVEV. The stretch at 240–260 forms a coiled coil; that stretch reads QMECAKSQFNETRLLANELQS. Disordered stretches follow at residues 297–319 and 535–558; these read SLRR…HPSS and KKLA…TQAP. The segment covering 303–319 has biased composition (polar residues); sequence ASENQSSGDRPSLHPSS. The region spanning 509–551 is the CCT domain; that stretch reads REAALTKFRMKRKDRCYEKKVRYESRKKLAEQRPRIKGQFVRQ.

It belongs to the ARR-like family. In terms of assembly, interacts with ADO1 and ADO2. Interacts with SPY (via N-terminus). Post-translationally, phosphorylation varies throughout the diurnal cycle and enhances ADO1 binding. In terms of processing, O-fucosylated by SPY. O-fucosylation promotes APRR5 proteolysis.

The protein resides in the nucleus. Functionally, transcriptional repressor of CCA1 and LHY, thereby controlling photoperiodic flowering response. Involved in the positive and negative feedback loops of the circadian clock. With RVE8, forms a negative feedback loop of the circadian clock. Expression of several members of the ARR-like family is controlled by circadian rhythm. Proteolytic substrate of the E3 ubiquitin ligase SCF(ADO1) complex. APRR9, APRR7, and APRR5 coordinately act on the upstream region of the target genes to repress their expression from noon until midnight. The particular coordinated sequential expression of APRR9, APRR7, APRR5, APRR3 and APPR1 result to circadian waves that may be at the basis of the endogenous circadian clock. Negative regulator of shade avoidance response. Involved in the inhibition of leaf expansion in shade avoidance response. The polypeptide is Two-component response regulator-like APRR5 (APRR5) (Arabidopsis thaliana (Mouse-ear cress)).